The chain runs to 933 residues: uncharacterized protein (933 aa).

Polar residues predominate over residues 1–28; it reads MNGNLPHIQIQSPKNSLDHLNNGRQATH. 3 disordered regions span residues 1–135, 173–194, and 252–275; these read MNGN…GESD, MDNESSEEERDGIPRVEGNAAD, and ATDFPNLAHESSEPSSSRHTADAQ. A compositionally biased stretch (basic and acidic residues) spans 29 to 47; that stretch reads NFEHGKPGDREEANGHADA. Low complexity predominate over residues 49-59; the sequence is SSSGRSRYLSS. Polar residues-rich tracts occupy residues 87-101 and 108-135; these read TLSFLNPSRASSNTH and NRSSNVTRTVSGRKSNHGSSLTDTGESD. A compositionally biased stretch (acidic residues) spans 173–182; sequence MDNESSEEER. Residues 264-275 show a composition bias toward polar residues; the sequence is EPSSSRHTADAQ. WD repeat units follow at residues 314–353, 385–423, 425–465, 467–506, 517–563, 568–607, 617–657, and 665–710; these read SSNNAIWAMKFSRDGRYLAVGGQDRILRIWAVLDSEHARS, GHTADILDLSWSRNNFLLSSSMDKTARLWHPVRKDCLCC, EHSD…VSFW, ELPELITAVAFSPDGGLAIAGTFVGLCLFYDTRGLRFRTQ, AKGS…LELK, ANAQSQNRAYFDDDGNYVICGSEDHQVFIWDLPPQHMHKT, ASVR…SVIS, and PSLR…AARK. Ser722 is subject to Phosphoserine. Positions 756–796 are disordered; the sequence is NASQITNNENNGNDDIKKGDEPEEEHVGLRKNSTQEKNANL. Polar residues predominate over residues 757 to 768; the sequence is ASQITNNENNGN. The segment covering 769–783 has biased composition (basic and acidic residues); that stretch reads DDIKKGDEPEEEHVG.

Its subcellular location is the endoplasmic reticulum. The protein localises to the nucleus. This is an uncharacterized protein from Schizosaccharomyces pombe (strain 972 / ATCC 24843) (Fission yeast).